A 253-amino-acid polypeptide reads, in one-letter code: Zinc finger protein JAGGED (253 aa).

Residues 1 to 46 (MRHEENYLDLNNLPDDFSKDGNKQALEEGSSSGQRKKKGSKEGKDE) are disordered. The span at 16–26 (DFSKDGNKQAL) shows a compositional bias: basic and acidic residues. A C2H2-type zinc finger spans residues 51–73 (YECRFCSLKFCKSQALGGHMNRH).

Interacts with GATA18/HAN. Expressed in the emerging leaf, sepal, petal, stamen and carpel primordia. Not expressed in the apical shoot meristem (SAM).

Its subcellular location is the nucleus. In terms of biological role, controls the morphogenesis of lateral organs. Functions in lateral organ shape and is sufficient to induce proliferation and growth of lateral organ tissue. Is necessary and sufficient for bract formation, but its expression is excluded from the cryptic bract, which could be a cause of bractless flowers in Arabidopsis. Participates with FIL and YAB3 in regulating valve margin development. Functions with JGL to define stamen and carpel shape. Functions with AS1 and AS2 in the sepal and petal primordia to repress boundary-specifying genes for normal development of the organs. The protein is Zinc finger protein JAGGED (JAG) of Arabidopsis thaliana (Mouse-ear cress).